Here is a 932-residue protein sequence, read N- to C-terminus: Protocadherin gamma-A3 (932 aa).

An N-terminal signal peptide occupies residues 1–29 (MTNCLSFRNGRGLALLCALLGTLCETGSG). Cadherin domains lie at 30-133 (QIRY…APNF), 134-242 (PTEE…PPMF), 243-347 (TQPE…APEI), 348-452 (TITS…PPTF), 453-562 (PHLS…APEI), and 570-682 (DGST…EPSA). At 30-692 (QIRYSVSEEL…KPNDSDLTLY (663 aa)) the chain is on the extracellular side. N-linked (GlcNAc...) asparagine glycosylation is found at N265, N419, and N545. N-linked (GlcNAc...) asparagine glycosylation occurs at N685. A helical transmembrane segment spans residues 693–713 (LVVAVAAVSCVFLAFVIVLLA). The Cytoplasmic segment spans residues 714 to 932 (LRLRRWHKSR…KKKSGKKEKK (219 aa)). Disordered regions lie at residues 805-841 (NLLQ…WPNN) and 902-932 (ATLT…KEKK). A compositionally biased stretch (basic residues) spans 922-932 (NKKKSGKKEKK).

The protein localises to the cell membrane. Potential calcium-dependent cell-adhesion protein. May be involved in the establishment and maintenance of specific neuronal connections in the brain. The sequence is that of Protocadherin gamma-A3 (PCDHGA3) from Homo sapiens (Human).